Consider the following 113-residue polypeptide: Putative hemolysin E-like protein (113 aa).

The protein belongs to the hemolysin E family.

This chain is Putative hemolysin E-like protein, found in Shigella flexneri.